A 361-amino-acid polypeptide reads, in one-letter code: MKNLFLFCRAGFEKECAAEIQQRAGELNVGGFVKANNNDAYVVYQCFEDDAADTLVKQLPLDSLIFARQMFAASDLLVDLPENDRISPIVAALSDVSKAGEVRVETPDTNEAKELSAFCRKFTVPLRQHLKKSGSLLAQENPKRPIIHVCFIGPGRAYVGYSYSNNSSPHFMGIPRLKMAADAPSRSSLKLDEAFGQFVPKEEQEERIRSGMNSVDLGACPGGWTYQLVRRGMFVSAVDNGPMDEKLMETGQVKHYREDGFRFEPQRKNIYWLVCDMVEKPARVAELIEAWAINGWFKEAIFNLKLPMKSRYKEVTAILETMQTILKENGVTDFKVQCKHLYHDRDEVTVHLWLRPNTAWN.

S-adenosyl-L-methionine is bound by residues Ser187, 220–223 (CPGG), Asp239, Asp259, and Asp276. Lys305 acts as the Proton acceptor in catalysis.

It belongs to the class I-like SAM-binding methyltransferase superfamily. RNA methyltransferase RlmE family. RlmM subfamily. As to quaternary structure, monomer.

The protein resides in the cytoplasm. It carries out the reaction cytidine(2498) in 23S rRNA + S-adenosyl-L-methionine = 2'-O-methylcytidine(2498) in 23S rRNA + S-adenosyl-L-homocysteine + H(+). Catalyzes the 2'-O-methylation at nucleotide C2498 in 23S rRNA. This Shewanella baltica (strain OS223) protein is Ribosomal RNA large subunit methyltransferase M.